The following is a 308-amino-acid chain: Probable 5-dehydro-4-deoxyglucarate dehydratase (308 aa).

This sequence belongs to the DapA family.

The catalysed reaction is 5-dehydro-4-deoxy-D-glucarate + H(+) = 2,5-dioxopentanoate + CO2 + H2O. It participates in carbohydrate acid metabolism; D-glucarate degradation; 2,5-dioxopentanoate from D-glucarate: step 2/2. This chain is Probable 5-dehydro-4-deoxyglucarate dehydratase (ycbC), found in Bacillus subtilis (strain 168).